Reading from the N-terminus, the 544-residue chain is Methionine--tRNA ligase 1 (544 aa).

Positions 10–20 (PYANGSLHLGH) match the 'HIGH' region motif. Positions 141, 144, 153, and 156 each coordinate Zn(2+). Positions 329-333 (KLSTS) match the 'KMSKS' region motif. Thr332 contacts ATP.

Belongs to the class-I aminoacyl-tRNA synthetase family. MetG type 1 subfamily. In terms of assembly, monomer. Requires Zn(2+) as cofactor.

The protein resides in the cytoplasm. It carries out the reaction tRNA(Met) + L-methionine + ATP = L-methionyl-tRNA(Met) + AMP + diphosphate. Functionally, is required not only for elongation of protein synthesis but also for the initiation of all mRNA translation through initiator tRNA(fMet) aminoacylation. This chain is Methionine--tRNA ligase 1, found in Bacillus cereus (strain ATCC 10987 / NRS 248).